The chain runs to 1273 residues: Chitin synthase 7 (1273 aa).

Residues 1–69 are disordered; it reads MPAVERNAPF…LINPSSGGPG (69 aa). Residues 1 to 79 are Cytoplasmic-facing; it reads MPAVERNAPF…FSAASRSKHR (79 aa). A helical transmembrane segment spans residues 80–100; sequence FSWWTAFSLFVTFWAPSPLLS. The Extracellular portion of the chain corresponds to 101–117; it reads SCCGLKDKQSRQAWREK. The helical transmembrane segment at 118–138 threads the bilayer; sequence VSLVFIAILLGGFIGFITMGL. Residues 139–360 lie on the Cytoplasmic side of the membrane; that stretch reads NAALCPSASS…FISNLVLYCS (222 aa). Residues 361–381 form a helical membrane-spanning segment; it reads LVVILAIVLIRFFMAVWFAWF. Residues 382 to 820 lie on the Extracellular side of the membrane; the sequence is MAGRMSSPPR…LCGTFCFSMQ (439 aa). N-linked (GlcNAc...) asparagine glycosylation is present at Asn412. Positions 416-451 are disordered; it reads AAPWANKQRPPPSQPARRRRDSAQSATPSVPDSLSV. 2 N-linked (GlcNAc...) asparagine glycosylation sites follow: Asn667 and Asn796. A helical transmembrane segment spans residues 821–841; it reads FVVFMDLLGTAVLPISIALTY. The Cytoplasmic portion of the chain corresponds to 842 to 857; that stretch reads TLVVTYCLNPPHSFTE. The chain crosses the membrane as a helical span at residues 858-878; sequence AIPLMLLVAVIGMPALLILLA. The Extracellular segment spans residues 879-881; that stretch reads TRK. A helical membrane pass occupies residues 882 to 902; it reads VVYVLWMLIYLLALPVWNFVL. Residues 903–1273 lie on the Cytoplasmic side of the membrane; the sequence is PVYSFWHFDD…RGRSYHDRFS (371 aa). Disordered stretches follow at residues 966–1009 and 1126–1273; these read RELE…SVTV and NGGG…DRFS. Positions 1000–1009 are enriched in low complexity; sequence SDSFSDSVTV. Pro residues predominate over residues 1215-1232; the sequence is QHPPQPSQPPQPPQPAQP. Residues 1233–1246 show a composition bias toward low complexity; the sequence is TRPGGAPAAPPRGA.

The protein belongs to the chitin synthase family. Class IV subfamily.

It localises to the cell membrane. The protein localises to the cytoplasmic vesicle membrane. It catalyses the reaction [(1-&gt;4)-N-acetyl-beta-D-glucosaminyl](n) + UDP-N-acetyl-alpha-D-glucosamine = [(1-&gt;4)-N-acetyl-beta-D-glucosaminyl](n+1) + UDP + H(+). Its function is as follows. Polymerizes chitin, a structural polymer of the cell wall and septum, by transferring the sugar moiety of UDP-GlcNAc to the non-reducing end of the growing chitin polymer. This Mycosarcoma maydis (Corn smut fungus) protein is Chitin synthase 7.